Reading from the N-terminus, the 95-residue chain is DNA-directed RNA polymerase subunit Rpo11 (95 aa).

It belongs to the archaeal Rpo11/eukaryotic RPB11/RPC19 RNA polymerase subunit family. Part of the RNA polymerase complex.

The protein resides in the cytoplasm. The catalysed reaction is RNA(n) + a ribonucleoside 5'-triphosphate = RNA(n+1) + diphosphate. DNA-dependent RNA polymerase (RNAP) catalyzes the transcription of DNA into RNA using the four ribonucleoside triphosphates as substrates. The sequence is that of DNA-directed RNA polymerase subunit Rpo11 from Pyrococcus horikoshii (strain ATCC 700860 / DSM 12428 / JCM 9974 / NBRC 100139 / OT-3).